The sequence spans 332 residues: Ketol-acid reductoisomerase (NADP(+)) (332 aa).

Residues 1-182 (MAQVWKDAEI…GSARAGLIKT (182 aa)) enclose the KARI N-terminal Rossmann domain. Residues 25 to 28 (YGIQ), lysine 48, serine 53, and 83 to 86 (DMIQ) contribute to the NADP(+) site. Residue histidine 108 is part of the active site. Glycine 134 contacts NADP(+). Residues 183 to 329 (TFKEEVETDW…RKMRKMMWPD (147 aa)) enclose the KARI C-terminal knotted domain. Mg(2+) is bound by residues aspartate 191, glutamate 195, glutamate 227, and glutamate 231. Serine 252 contacts substrate.

It belongs to the ketol-acid reductoisomerase family. It depends on Mg(2+) as a cofactor.

It catalyses the reaction (2R)-2,3-dihydroxy-3-methylbutanoate + NADP(+) = (2S)-2-acetolactate + NADPH + H(+). It carries out the reaction (2R,3R)-2,3-dihydroxy-3-methylpentanoate + NADP(+) = (S)-2-ethyl-2-hydroxy-3-oxobutanoate + NADPH + H(+). It participates in amino-acid biosynthesis; L-isoleucine biosynthesis; L-isoleucine from 2-oxobutanoate: step 2/4. Its pathway is amino-acid biosynthesis; L-valine biosynthesis; L-valine from pyruvate: step 2/4. In terms of biological role, involved in the biosynthesis of branched-chain amino acids (BCAA). Catalyzes an alkyl-migration followed by a ketol-acid reduction of (S)-2-acetolactate (S2AL) to yield (R)-2,3-dihydroxy-isovalerate. In the isomerase reaction, S2AL is rearranged via a Mg-dependent methyl migration to produce 3-hydroxy-3-methyl-2-ketobutyrate (HMKB). In the reductase reaction, this 2-ketoacid undergoes a metal-dependent reduction by NADPH to yield (R)-2,3-dihydroxy-isovalerate. This is Ketol-acid reductoisomerase (NADP(+)) from Cenarchaeum symbiosum (strain A).